The chain runs to 177 residues: Large ribosomal subunit protein uL6 (177 aa).

The protein belongs to the universal ribosomal protein uL6 family. Part of the 50S ribosomal subunit.

Its function is as follows. This protein binds to the 23S rRNA, and is important in its secondary structure. It is located near the subunit interface in the base of the L7/L12 stalk, and near the tRNA binding site of the peptidyltransferase center. This chain is Large ribosomal subunit protein uL6, found in Vibrio vulnificus (strain CMCP6).